The primary structure comprises 707 residues: Protein kinase C theta type (707 aa).

Positions 1–107 (MSPFLRIGLS…KNNGRTEIWL (107 aa)) constitute a C2 domain. Tyrosine 90 is subject to Phosphotyrosine; by LCK. The Phorbol-ester/DAG-type 1 zinc-finger motif lies at 159–209 (CHEFTATFFPQPTFCSVCHEFVWGLNKQGYQCRQCNAAIHKKCIDKVIAKC). Threonine 219 carries the post-translational modification Phosphothreonine; by autocatalysis. The segment at 231 to 281 (PHRFKVYNYKSPTFCEHCGTLLWGLARQGLKCDACGMNVHHRCQTKVANLC) adopts a Phorbol-ester/DAG-type 2 zinc-finger fold. Positions 327-365 (ETRPPCVPTPGKREPQGISWDSPLDGSNKSAGPPEPEVS) are disordered. Serine 348 is subject to Phosphoserine. Positions 380-634 (FILHKMLGKG…RGDIRQHPLF (255 aa)) constitute a Protein kinase domain. ATP contacts are provided by residues 386 to 394 (LGKGSFGKV) and lysine 409. Aspartate 504 acts as the Proton acceptor in catalysis. Threonine 538 is modified (phosphothreonine; by PDPK1). The AGC-kinase C-terminal domain occupies 635 to 706 (REINWEELER…INPGMETLIC (72 aa)). Position 676 is a phosphoserine; by autocatalysis (serine 676). The residue at position 685 (serine 685) is a Phosphoserine. Serine 695 carries the post-translational modification Phosphoserine; by autocatalysis.

This sequence belongs to the protein kinase superfamily. AGC Ser/Thr protein kinase family. PKC subfamily. As to quaternary structure, part of a membrane raft complex composed at least of BCL10, CARD11, MALT1 and IKBKB. Interacts with GLRX3 (via N-terminus). Interacts with ECT2. Interacts with CCDC88A/GIV; the interaction leads to phosphorylation of CCDC88A and inhibition of its guanine nucleotide exchange factor activity. Interacts with CD28. Requires Mg(2+) as cofactor. In terms of processing, autophosphorylation at Thr-219 is required for targeting to the TCR and cellular function of PRKCQ upon antigen receptor ligation. Following TCR stimulation, phosphorylated at Tyr-90 and Ser-685. In terms of tissue distribution, T-lymphocytes and skeletal muscle.

The protein localises to the cytoplasm. The protein resides in the cell membrane. It carries out the reaction L-seryl-[protein] + ATP = O-phospho-L-seryl-[protein] + ADP + H(+). It catalyses the reaction L-threonyl-[protein] + ATP = O-phospho-L-threonyl-[protein] + ADP + H(+). With respect to regulation, novel PKCs (PRKCD, PRKCE, PRKCH and PRKCQ) are calcium-insensitive, but activated by diacylglycerol (DAG) and phosphatidylserine. Three specific sites; Thr-538 (activation loop of the kinase domain), Ser-676 (turn motif) and Ser-695 (hydrophobic region), need to be phosphorylated for its full activation. Calcium-independent, phospholipid- and diacylglycerol (DAG)-dependent serine/threonine-protein kinase that mediates non-redundant functions in T-cell receptor (TCR) signaling, including T-cells activation, proliferation, differentiation and survival, by mediating activation of multiple transcription factors such as NF-kappa-B, JUN, NFATC1 and NFATC2. In TCR-CD3/CD28-co-stimulated T-cells, is required for the activation of NF-kappa-B and JUN, which in turn are essential for IL2 production, and participates in the calcium-dependent NFATC1 and NFATC2 transactivation. Mediates the activation of the canonical NF-kappa-B pathway (NFKB1) by direct phosphorylation of CARD11 on several serine residues, inducing CARD11 association with lipid rafts and recruitment of the BCL10-MALT1 complex, which then activates IKK complex, resulting in nuclear translocation and activation of NFKB1. May also play an indirect role in activation of the non-canonical NF-kappa-B (NFKB2) pathway. In the signaling pathway leading to JUN activation, acts by phosphorylating the mediator STK39/SPAK and may not act through MAP kinases signaling. Plays a critical role in TCR/CD28-induced NFATC1 and NFATC2 transactivation by participating in the regulation of reduced inositol 1,4,5-trisphosphate generation and intracellular calcium mobilization. After costimulation of T-cells through CD28 can phosphorylate CBLB and is required for the ubiquitination and subsequent degradation of CBLB, which is a prerequisite for the activation of TCR. During T-cells differentiation, plays an important role in the development of T-helper 2 (Th2) cells following immune and inflammatory responses, and, in the development of inflammatory autoimmune diseases, is necessary for the activation of IL17-producing Th17 cells. May play a minor role in Th1 response. Upon TCR stimulation, mediates T-cell protective survival signal by phosphorylating BAD, thus protecting T-cells from BAD-induced apoptosis, and by up-regulating BCL-X(L)/BCL2L1 levels through NF-kappa-B and JUN pathways. In platelets, regulates signal transduction downstream of the ITGA2B, CD36/GP4, F2R/PAR1 and F2RL3/PAR4 receptors, playing a positive role in 'outside-in' signaling and granule secretion signal transduction. May relay signals from the activated ITGA2B receptor by regulating the uncoupling of WASP and WIPF1, thereby permitting the regulation of actin filament nucleation and branching activity of the Arp2/3 complex. May mediate inhibitory effects of free fatty acids on insulin signaling by phosphorylating IRS1, which in turn blocks IRS1 tyrosine phosphorylation and downstream activation of the PI3K/AKT pathway. Phosphorylates MSN (moesin) in the presence of phosphatidylglycerol or phosphatidylinositol. Phosphorylates PDPK1 at 'Ser-504' and 'Ser-532' and negatively regulates its ability to phosphorylate PKB/AKT1. Phosphorylates CCDC88A/GIV and inhibits its guanine nucleotide exchange factor activity. Phosphorylates and activates LRRK1, which phosphorylates RAB proteins involved in intracellular trafficking. The sequence is that of Protein kinase C theta type (Prkcq) from Mus musculus (Mouse).